The chain runs to 217 residues: Adenylate kinase (217 aa).

An ATP-binding site is contributed by 10–15 (GAGKGT). The segment at 30-59 (STGDMFRAAMKEETPLGLEAKSYIDKGELV) is NMP. Residues Thr31, Arg36, 57–59 (ELV), 85–88 (GFPR), and Gln92 each bind AMP. Residues 126–163 (GRRICSVCGTTYHLVFNPPKTPGICDKDGGELYQRADD) are LID. Residue Arg127 coordinates ATP. Residues Cys130 and Cys133 each contribute to the Zn(2+) site. 136–137 (TY) contributes to the ATP binding site. 2 residues coordinate Zn(2+): Cys150 and Asp153. 2 residues coordinate AMP: Arg160 and Arg171. Gln199 lines the ATP pocket.

Belongs to the adenylate kinase family. As to quaternary structure, monomer.

The protein localises to the cytoplasm. It catalyses the reaction AMP + ATP = 2 ADP. It functions in the pathway purine metabolism; AMP biosynthesis via salvage pathway; AMP from ADP: step 1/1. Catalyzes the reversible transfer of the terminal phosphate group between ATP and AMP. Plays an important role in cellular energy homeostasis and in adenine nucleotide metabolism. This is Adenylate kinase from Bacillus subtilis (strain 168).